A 170-amino-acid chain; its full sequence is Adenine phosphoribosyltransferase (170 aa).

This sequence belongs to the purine/pyrimidine phosphoribosyltransferase family. In terms of assembly, homodimer.

The protein resides in the cytoplasm. The catalysed reaction is AMP + diphosphate = 5-phospho-alpha-D-ribose 1-diphosphate + adenine. Its pathway is purine metabolism; AMP biosynthesis via salvage pathway; AMP from adenine: step 1/1. Its function is as follows. Catalyzes a salvage reaction resulting in the formation of AMP, that is energically less costly than de novo synthesis. The polypeptide is Adenine phosphoribosyltransferase (Bacillus licheniformis (strain ATCC 14580 / DSM 13 / JCM 2505 / CCUG 7422 / NBRC 12200 / NCIMB 9375 / NCTC 10341 / NRRL NRS-1264 / Gibson 46)).